The primary structure comprises 355 residues: Probable NADPH-dependent quinone reductase tdiC (355 aa).

This sequence belongs to the zinc-containing alcohol dehydrogenase family. NADPH serves as cofactor.

It participates in secondary metabolite biosynthesis. Functionally, probable NADPH-dependent quinone reductase; part of the gene cluster that mediates the biosynthesis of terrequinone A, an antitumor agent. The first step in the biosynthetic pathway for terrequinone A is formation of indole pyruvic acid (IPA) from L-tryptophan by the aminotransferase tdiD. The nonribosomal peptide synthase tdiA then immediately converts unstable IPA to didemethylasterriquinone D (DDAQ D), via condensation of 2 IPA molecules. The symmetric connectivity of the 2 IPA molecules is thought to arise by head-to-tail dual Claisen condensations facilitated by the TE domain. TdiB then catalyzes reverse prenylation by transferring dimethylallyl diphosphate to carbon atom 2' of DDAQ D, to yield asterriquinone C-1. Finally, tdiC and tdiE enzymes robustly convert asterriquinone C-1 to terrequinone A via a transformation involving regular prenylation at carbon atom 5, which requires elimination of the hydroxy group on C-5. This is Probable NADPH-dependent quinone reductase tdiC from Emericella nidulans (strain FGSC A4 / ATCC 38163 / CBS 112.46 / NRRL 194 / M139) (Aspergillus nidulans).